Here is a 279-residue protein sequence, read N- to C-terminus: MTTTRTERNFAGIGDVRIVYDVWTPDTAPQAVVVLAHGLGEHARRYDHVAQRLGAAGLVTYALDHRGHGRSGGKRVLVRDISEYTADFDTLVGIATREYPGCKRIVLGHSMGGGIVFAYGVERPDNYDLMVLSAPAVAAQDLVSPVVAVAAKLLGVVVPGLPVQELDFTAISRDPEVVQAYNTDPLVHHGRVPAGIGRALLQVGETMPRRAPALTAPLLVLHGTDDRLIPIEGSRRLVECVGSADVQLKEYPGLYHEVFNEPERNQVLDDVVAWLTERL.

Ser110 functions as the Nucleophile in the catalytic mechanism. Active-site charge relay system residues include Asp226 and His256.

This sequence belongs to the AB hydrolase superfamily. Monomer.

It localises to the secreted. The protein localises to the cell wall. The catalysed reaction is a 1-acylglycerol + H2O = glycerol + a fatty acid + H(+). The enzyme catalyses Hydrolyzes glycerol monoesters of long-chain fatty acids.. It carries out the reaction 1-butyrylglycerol + H2O = butanoate + glycerol + H(+). It catalyses the reaction 1-octanoylglycerol + H2O = octanoate + glycerol + H(+). The catalysed reaction is 1-decanoylglycerol + H2O = decanoate + glycerol + H(+). The enzyme catalyses 1-dodecanoylglycerol + H2O = dodecanoate + glycerol + H(+). It carries out the reaction 1-tetradecanoylglycerol + H2O = tetradecanoate + glycerol + H(+). It catalyses the reaction 1-(9Z-octadecenoyl)-glycerol + H2O = glycerol + (9Z)-octadecenoate + H(+). The catalysed reaction is 2-(9Z-octadecenoyl)-glycerol + H2O = glycerol + (9Z)-octadecenoate + H(+). With respect to regulation, inhibited by the serine esterase inhibitors PMSF (100%), E600 (80%) and THL (22%). Virtual screening identified a tautomer of ZINC13451138, known inhibitor for HIV-1 integrase, as a potential inhibitor. Functionally, involved in the hydrolysis of exogenous host lipids during chronic infection. Catalyzes the hydrolysis of both monoacylglycerols (MAG) and diacylglycerols (DAG), with a preference for MAG. It hydrolyzes 2-MAG, 1-3-MAG and MAG with short, medium and long chain fatty acids such as 1-monobutyroyl-rac-glycerol (MC4), 1-mono-octanoyl-rac-glycerol (MC8), 1-monodecanoyl-rac-glycerol (MC10), 1-monolauroyl-rac-glycerol (MC12), 1-monomyristoyl-rac-glycerol (MC14) and 1-mono-oleyl-rac-glycerol (MC18:1). Also able to hydrolyze DAG with short (DiC6) and medium (DiC10) fatty acid chains, but not with longest fatty acid chains. Can also hydrolyze vinyl laurate (VC12), vinyl butyrate (VC4) and vinyl propionate (VC3). Its function is as follows. Induces an inflammatory response and cell apoptosis in the host cells. Increases expression of IL-6, NF-kappaB, TLR-2, TLR-6, TNF-alpha, and MyD88 in mouse alveolar macrophage RAW264.7 cells. Persistent expression induces RAW264.7 cell apoptosis in vitro. The sequence is that of Monoacylglycerol lipase from Mycobacterium tuberculosis (strain ATCC 25618 / H37Rv).